The primary structure comprises 83 residues: Small ribosomal subunit protein bS16 (83 aa).

It belongs to the bacterial ribosomal protein bS16 family.

This is Small ribosomal subunit protein bS16 from Shewanella denitrificans (strain OS217 / ATCC BAA-1090 / DSM 15013).